The sequence spans 401 residues: Phosphoglycerate kinase (401 aa).

Residues 20-22 (DFN), Arg35, 58-61 (HLGR), Arg117, and Arg154 each bind substrate. Residues Lys204, Gly298, Glu329, and 358 to 361 (GGDS) each bind ATP.

Belongs to the phosphoglycerate kinase family. As to quaternary structure, monomer.

The protein resides in the cytoplasm. The enzyme catalyses (2R)-3-phosphoglycerate + ATP = (2R)-3-phospho-glyceroyl phosphate + ADP. The protein operates within carbohydrate degradation; glycolysis; pyruvate from D-glyceraldehyde 3-phosphate: step 2/5. The chain is Phosphoglycerate kinase from Bifidobacterium longum (strain NCC 2705).